The sequence spans 86 residues: Large ribosomal subunit protein uL23 (86 aa).

Belongs to the universal ribosomal protein uL23 family. As to quaternary structure, part of the 50S ribosomal subunit. Contacts protein L29.

In terms of biological role, binds to 23S rRNA. One of the proteins that surrounds the polypeptide exit tunnel on the outside of the ribosome. The chain is Large ribosomal subunit protein uL23 from Methanothermobacter thermautotrophicus (strain ATCC 29096 / DSM 1053 / JCM 10044 / NBRC 100330 / Delta H) (Methanobacterium thermoautotrophicum).